A 168-amino-acid polypeptide reads, in one-letter code: Peptide deformylase (168 aa).

2 residues coordinate Fe cation: cysteine 92 and histidine 134. Glutamate 135 is a catalytic residue. Histidine 138 lines the Fe cation pocket.

It belongs to the polypeptide deformylase family. Fe(2+) is required as a cofactor.

It carries out the reaction N-terminal N-formyl-L-methionyl-[peptide] + H2O = N-terminal L-methionyl-[peptide] + formate. Its function is as follows. Removes the formyl group from the N-terminal Met of newly synthesized proteins. Requires at least a dipeptide for an efficient rate of reaction. N-terminal L-methionine is a prerequisite for activity but the enzyme has broad specificity at other positions. In Pseudomonas aeruginosa (strain ATCC 15692 / DSM 22644 / CIP 104116 / JCM 14847 / LMG 12228 / 1C / PRS 101 / PAO1), this protein is Peptide deformylase.